We begin with the raw amino-acid sequence, 941 residues long: Isoleucine--tRNA ligase (941 aa).

The 'HIGH' region signature appears at 59–69 (PYANGNIHIGH). Glutamate 562 is a binding site for L-isoleucyl-5'-AMP. Positions 603-607 (KMSKS) match the 'KMSKS' region motif. Lysine 606 provides a ligand contact to ATP. Positions 904, 907, 924, and 927 each coordinate Zn(2+).

Belongs to the class-I aminoacyl-tRNA synthetase family. IleS type 1 subfamily. In terms of assembly, monomer. Zn(2+) is required as a cofactor.

It is found in the cytoplasm. The catalysed reaction is tRNA(Ile) + L-isoleucine + ATP = L-isoleucyl-tRNA(Ile) + AMP + diphosphate. Its function is as follows. Catalyzes the attachment of isoleucine to tRNA(Ile). As IleRS can inadvertently accommodate and process structurally similar amino acids such as valine, to avoid such errors it has two additional distinct tRNA(Ile)-dependent editing activities. One activity is designated as 'pretransfer' editing and involves the hydrolysis of activated Val-AMP. The other activity is designated 'posttransfer' editing and involves deacylation of mischarged Val-tRNA(Ile). This is Isoleucine--tRNA ligase from Haemophilus influenzae (strain PittGG).